A 143-amino-acid chain; its full sequence is Large ribosomal subunit protein uL11 (143 aa).

Belongs to the universal ribosomal protein uL11 family. In terms of assembly, part of the ribosomal stalk of the 50S ribosomal subunit. Interacts with L10 and the large rRNA to form the base of the stalk. L10 forms an elongated spine to which L12 dimers bind in a sequential fashion forming a multimeric L10(L12)X complex. One or more lysine residues are methylated.

Forms part of the ribosomal stalk which helps the ribosome interact with GTP-bound translation factors. The polypeptide is Large ribosomal subunit protein uL11 (Leptothrix cholodnii (strain ATCC 51168 / LMG 8142 / SP-6) (Leptothrix discophora (strain SP-6))).